Consider the following 205-residue polypeptide: MAFDKSEWVPLTGLGRMVQAGEIKSIDEILSSGKPIKEPEIVDAFLPDLVDEVLDINMVQRMTDSGRRVKFRAVVVVGNRDGYIGFGQGKDAQVGDAIKKAIVSAKINLVKVRRGCGSWECGCSNPHSIPMLVTGDAGSVRVTLRPAPQGIGLVTGDIGKKVLELAGIRDVWAQTQGQTRTTINYAKATFNALKATNMIRLGGME.

In terms of domain architecture, S5 DRBM spans 49–112 (LVDEVLDINM…VSAKINLVKV (64 aa)).

It belongs to the universal ribosomal protein uS5 family. Part of the 30S ribosomal subunit. Contacts protein S4.

In terms of biological role, with S4 and S12 plays an important role in translational accuracy. This Methanospirillum hungatei JF-1 (strain ATCC 27890 / DSM 864 / NBRC 100397 / JF-1) protein is Small ribosomal subunit protein uS5.